Reading from the N-terminus, the 260-residue chain is MAVVAPTAREENVYMAKLADRAESDEEMVEFMEKVSNSLGSEELTVEERNLLSVAYKNVIGARRASWRIISSIEQKEESRGNEEHVNSIREYRSKIENELSKICDGILKLLDSKLIPSATSGDSKVFYLKMKGDYHRYLAEFKTGAERKEAAESTLTAYKAAQDIASAELAPTHPIRLGLALNFSVFYYEILNSPDRACNLAKQAFDEAIAELDTLGEESYKDSTLIMQLLRDNLTLWTSDMQDDGADEIKEDPKPEEKN.

Belongs to the 14-3-3 family. Homodimer.

The sequence is that of 14-3-3 protein 3 (TFT3) from Solanum lycopersicum (Tomato).